Here is a 1756-residue protein sequence, read N- to C-terminus: Transposon Ty1-PR2 Gag-Pol polyprotein (1756 aa).

3 stretches are compositionally biased toward polar residues: residues 1 to 10, 48 to 60, and 127 to 152; these read MESQQLSNYP, TKAN…TPAS, and QSQF…GNTF. Disordered regions lie at residues 1–93, 126–173, and 352–421; these read MESQ…MMTQ, PQSQ…RPPP, and GSRN…SKST. Residues 153–165 show a composition bias toward low complexity; sequence TDSSSADSDMTST. The segment at 299 to 401 is RNA-binding; the sequence is NNGIHINNKV…NSKSKTARAH (103 aa). The span at 402–418 shows a compositional bias: low complexity; the sequence is NVSTSNNSPSTDNDSIS. The For protease activity; shared with dimeric partner role is filled by Asp-461. An integrase-type zinc finger-like region spans residues 583-640; sequence NVHTSESTRKYPYPFIHRMLAHANAQTIRYSLKNNTITYFNESDVDWSSAIDYQCPDC. The Integrase catalytic domain maps to 660 to 836; the sequence is NSYEPFQYLH…AGLDISTLLP (177 aa). Mg(2+)-binding residues include Asp-671 and Asp-736. Disordered regions lie at residues 957–1088, 1093–1112, and 1131–1188; these read SKAV…ETEK, RSPS…NIVP, and DLPL…DNET. Positions 961–970 are enriched in low complexity; the sequence is SPTDSTPPST. Positions 1006–1016 are enriched in polar residues; that stretch reads STPQISNIEST. A compositionally biased stretch (basic and acidic residues) spans 1039 to 1054; it reads ESSHASKSKDFRHSDS. Composition is skewed to polar residues over residues 1055 to 1083 and 1102 to 1112; these read YSEN…QISD and PENNSSHNIVP. A Bipartite nuclear localization signal motif is present at residues 1179 to 1213; the sequence is KKRSLEDNETEIKVSRDTWNTKNMRSLEPPRSKKR. The Reverse transcriptase Ty1/copia-type domain maps to 1339-1477; that stretch reads NNYYITQLDI…DILGLEIKYQ (139 aa). The Mg(2+) site is built by Asp-1347, Asp-1428, Asp-1429, Asp-1611, Glu-1653, and Asp-1686. The 143-residue stretch at 1611 to 1753 folds into the RNase H Ty1/copia-type domain; sequence DASYGNQPYY…IKTFKLLTNK (143 aa).

As to quaternary structure, the capsid protein forms a homotrimer, from which the VLPs are assembled. The protease is a homodimer, whose active site consists of two apposed aspartic acid residues. In terms of processing, initially, virus-like particles (VLPs) are composed of the structural unprocessed proteins Gag and Gag-Pol, and also contain the host initiator methionine tRNA (tRNA(i)-Met) which serves as a primer for minus-strand DNA synthesis, and a dimer of genomic Ty RNA. Processing of the polyproteins occurs within the particle and proceeds by an ordered pathway, called maturation. First, the protease (PR) is released by autocatalytic cleavage of the Gag-Pol polyprotein yielding capsid protein p45 and a Pol-p154 precursor protein. This cleavage is a prerequisite for subsequent processing of Pol-p154 at the remaining sites to release the mature structural and catalytic proteins. Maturation takes place prior to the RT reaction and is required to produce transposition-competent VLPs.

The protein resides in the cytoplasm. Its subcellular location is the nucleus. It carries out the reaction DNA(n) + a 2'-deoxyribonucleoside 5'-triphosphate = DNA(n+1) + diphosphate. It catalyses the reaction Endonucleolytic cleavage to 5'-phosphomonoester.. Its function is as follows. Capsid protein (CA) is the structural component of the virus-like particle (VLP), forming the shell that encapsulates the retrotransposons dimeric RNA genome. The particles are assembled from trimer-clustered units and there are holes in the capsid shells that allow for the diffusion of macromolecules. CA also has nucleocapsid-like chaperone activity, promoting primer tRNA(i)-Met annealing to the multipartite primer-binding site (PBS), dimerization of Ty1 RNA and initiation of reverse transcription. Functionally, the aspartyl protease (PR) mediates the proteolytic cleavages of the Gag and Gag-Pol polyproteins after assembly of the VLP. In terms of biological role, reverse transcriptase/ribonuclease H (RT) is a multifunctional enzyme that catalyzes the conversion of the retro-elements RNA genome into dsDNA within the VLP. The enzyme displays a DNA polymerase activity that can copy either DNA or RNA templates, and a ribonuclease H (RNase H) activity that cleaves the RNA strand of RNA-DNA heteroduplexes during plus-strand synthesis and hydrolyzes RNA primers. The conversion leads to a linear dsDNA copy of the retrotransposon that includes long terminal repeats (LTRs) at both ends. Integrase (IN) targets the VLP to the nucleus, where a subparticle preintegration complex (PIC) containing at least integrase and the newly synthesized dsDNA copy of the retrotransposon must transit the nuclear membrane. Once in the nucleus, integrase performs the integration of the dsDNA into the host genome. The sequence is that of Transposon Ty1-PR2 Gag-Pol polyprotein (TY1B-PR2) from Saccharomyces cerevisiae (strain ATCC 204508 / S288c) (Baker's yeast).